The chain runs to 115 residues: NAD(P)H-quinone oxidoreductase subunit M (115 aa).

It belongs to the complex I NdhM subunit family. In terms of assembly, NDH-1 can be composed of about 15 different subunits; different subcomplexes with different compositions have been identified which probably have different functions.

The protein resides in the cellular thylakoid membrane. It carries out the reaction a plastoquinone + NADH + (n+1) H(+)(in) = a plastoquinol + NAD(+) + n H(+)(out). The enzyme catalyses a plastoquinone + NADPH + (n+1) H(+)(in) = a plastoquinol + NADP(+) + n H(+)(out). Functionally, NDH-1 shuttles electrons from an unknown electron donor, via FMN and iron-sulfur (Fe-S) centers, to quinones in the respiratory and/or the photosynthetic chain. The immediate electron acceptor for the enzyme in this species is believed to be plastoquinone. Couples the redox reaction to proton translocation, and thus conserves the redox energy in a proton gradient. Cyanobacterial NDH-1 also plays a role in inorganic carbon-concentration. This is NAD(P)H-quinone oxidoreductase subunit M from Prochlorococcus marinus (strain MIT 9303).